The chain runs to 356 residues: Phosphate acyltransferase (356 aa).

This sequence belongs to the PlsX family. As to quaternary structure, homodimer. Probably interacts with PlsY.

The protein resides in the cytoplasm. It catalyses the reaction a fatty acyl-[ACP] + phosphate = an acyl phosphate + holo-[ACP]. Its pathway is lipid metabolism; phospholipid metabolism. Catalyzes the reversible formation of acyl-phosphate (acyl-PO(4)) from acyl-[acyl-carrier-protein] (acyl-ACP). This enzyme utilizes acyl-ACP as fatty acyl donor, but not acyl-CoA. The polypeptide is Phosphate acyltransferase (Mesorhizobium japonicum (strain LMG 29417 / CECT 9101 / MAFF 303099) (Mesorhizobium loti (strain MAFF 303099))).